A 574-amino-acid chain; its full sequence is Serine/threonine-protein kinase B (574 aa).

Positions 34 to 301 (YQTLGLLGKG…VLDALEMPTY (268 aa)) constitute a Protein kinase domain. ATP contacts are provided by residues 40–48 (LGKGGFGAT) and K65. D163 serves as the catalytic Proton acceptor. A disordered region spans residues 319-407 (GAGDEPATGI…GGSVGAGGID (89 aa)). The span at 343 to 364 (TRFNTNVQPRDPSSTSLNTGIK) shows a compositional bias: polar residues. 2 consecutive Pentapeptide repeat domains span residues 454–493 (QNLV…DFGK) and 504–543 (ANLS…NFSG).

This sequence belongs to the protein kinase superfamily. Ser/Thr protein kinase family. Post-translationally, autophosphorylated.

It catalyses the reaction L-seryl-[protein] + ATP = O-phospho-L-seryl-[protein] + ADP + H(+). The catalysed reaction is L-threonyl-[protein] + ATP = O-phospho-L-threonyl-[protein] + ADP + H(+). Its function is as follows. Protein kinase required for cell motility, but not for phototaxis. The chain is Serine/threonine-protein kinase B (spkB) from Synechocystis sp. (strain ATCC 27184 / PCC 6803 / Kazusa).